A 60-amino-acid chain; its full sequence is Homeobox protein engrailed-like B (60 aa).

Residues 1–41 (VEQLQRLKSEFGASRYLTEARRQALAQELRLNEAQIKIWFQ) constitute a DNA-binding region (homeobox).

Belongs to the engrailed homeobox family.

It is found in the nucleus. The polypeptide is Homeobox protein engrailed-like B (Myxine glutinosa (Atlantic hagfish)).